The primary structure comprises 190 residues: Peptidyl-prolyl cis-trans isomerase A (190 aa).

The N-terminal stretch at 1-23 is a signal peptide; sequence MSKRILAAVVTVLSLTAFSPAFA. Positions 26–187 constitute a PPIase cyclophilin-type domain; that stretch reads TSTHVLLTTS…KPIVIQSAKI (162 aa).

Belongs to the cyclophilin-type PPIase family.

It localises to the periplasm. It catalyses the reaction [protein]-peptidylproline (omega=180) = [protein]-peptidylproline (omega=0). Its function is as follows. PPIases accelerate the folding of proteins. It catalyzes the cis-trans isomerization of proline imidic peptide bonds in oligopeptides. This Dickeya dadantii (strain 3937) (Erwinia chrysanthemi (strain 3937)) protein is Peptidyl-prolyl cis-trans isomerase A (rotA).